Here is a 540-residue protein sequence, read N- to C-terminus: Chaperonin GroEL (540 aa).

ATP contacts are provided by residues 29–32 (TLGP), 86–90 (DGTTT), Gly-413, 477–479 (DAL), and Asp-493.

The protein belongs to the chaperonin (HSP60) family. Forms a cylinder of 14 subunits composed of two heptameric rings stacked back-to-back. Interacts with the co-chaperonin GroES.

The protein resides in the cytoplasm. The catalysed reaction is ATP + H2O + a folded polypeptide = ADP + phosphate + an unfolded polypeptide.. In terms of biological role, together with its co-chaperonin GroES, plays an essential role in assisting protein folding. The GroEL-GroES system forms a nano-cage that allows encapsulation of the non-native substrate proteins and provides a physical environment optimized to promote and accelerate protein folding. This chain is Chaperonin GroEL, found in Clostridium botulinum (strain Alaska E43 / Type E3).